The chain runs to 147 residues: Hemoglobin subunit epsilon (147 aa).

Residues 3–147 (HFTAEEKAAI…VAIALGHKYH (145 aa)) enclose the Globin domain. Phosphoserine occurs at positions 14 and 51. Residues H64 and H93 each contribute to the heme b site.

This sequence belongs to the globin family. In terms of assembly, heterotetramer of two alpha chains and two epsilon chains in early embryonic hemoglobin Gower-2; two zeta chains and two epsilon chains in early embryonic hemoglobin Gower-1. In terms of tissue distribution, red blood cells.

Functionally, the epsilon chain is a beta-type chain of early mammalian embryonic hemoglobin. The protein is Hemoglobin subunit epsilon (HBE1) of Saimiri boliviensis boliviensis (Bolivian squirrel monkey).